A 932-amino-acid chain; its full sequence is Protocadherin gamma-A2 (932 aa).

Residues 1-28 (MAALQKLPHCRKLFLLCFLLATLWEARA) form the signal peptide. 6 Cadherin domains span residues 29–133 (GQIR…APRF), 134–242 (GVEE…APVF), 243–347 (TQPE…APEF), 348–452 (YMTS…APAF), 453–562 (SRTS…PPEI), and 570–682 (DGST…EPSA). Residues 29–692 (GQIRYSVREE…KPNDSDLTLY (664 aa)) are Extracellular-facing. Asparagine 419 and asparagine 545 each carry an N-linked (GlcNAc...) asparagine glycan. Asparagine 685 carries N-linked (GlcNAc...) asparagine glycosylation. A helical transmembrane segment spans residues 693-713 (LVVAVAAVSCVFLAFVIVLLA). Residues 714–932 (HRLRRWHKSR…KKKSGKKEKK (219 aa)) lie on the Cytoplasmic side of the membrane. Disordered regions lie at residues 798–841 (LEEE…WPNN) and 902–932 (ATLTNAAGKRDGKAPAGGNGNKKKSGKKEKK). Positions 806–841 (FSQQAPPNTDWRFSQAQRPGTSGSQNGDDTGTWPNN) are enriched in polar residues. Positions 922–932 (NKKKSGKKEKK) are enriched in basic residues.

It is found in the cell membrane. In terms of biological role, potential calcium-dependent cell-adhesion protein. May be involved in the establishment and maintenance of specific neuronal connections in the brain. This Pan troglodytes (Chimpanzee) protein is Protocadherin gamma-A2 (PCDHGA2).